Consider the following 483-residue polypeptide: MEKDISRKIDLLNILIEEKRWFTLFELEKNLNCSSKTIRKDISIINDLLPKTIFIHSKKGKGVKLSLPQNQSISEAISNLLKKSLTFLAIQQLLEERSNTVTSLADKLYLPISSTNIVLKRVSKYIKKFGLSLEKKPLRIVGDEFQIILMFSERYLESYPDTEWPFTEYKEEMLIDYINYIEEKLEIVFYSNDKRRMAFIMTILFKRIKQGHKVKFSEWIIKETMESIYYKKIFEGKNVIKVNKNRSLNIEEQVLLVIMVKLSRYVSKDENNLKQEELVLYKEGESTTYTYVKNFISILEQELKIDLNNNEEFVYGMIEYCREAFHILKFIPILKAPEKDTCKYIKKHYEETFYLVKRAYNKWGAEMKLTDIPDEEIAKVTMRIVAIGKQHNINRKKVLLITGEGKSWEEYMKSRINKRYGDQLKFVGGHAKILNGNTDNIDNIDIDFIITTVPLNFSWKSIVYVSPILQERDFYEIGIFASK.

PRD domains lie at proline 165 to glutamate 270 and glutamate 283 to asparagine 394.

This sequence belongs to the AtxA/AcpA family.

Functionally, acpA and AcpB regulate cap gene expression and capsule synthesis. The protein is Capsule synthesis positive regulator AcpA (acpA) of Bacillus anthracis.